The chain runs to 208 residues: Ribosomal RNA small subunit methyltransferase G (208 aa).

Residues glycine 78, phenylalanine 83, glutamate 101–serine 103, isoleucine 129–glutamate 130, and arginine 142 contribute to the S-adenosyl-L-methionine site.

The protein belongs to the methyltransferase superfamily. RNA methyltransferase RsmG family.

The protein localises to the cytoplasm. Its function is as follows. Specifically methylates the N7 position of a guanine in 16S rRNA. In Borreliella burgdorferi (strain ATCC 35210 / DSM 4680 / CIP 102532 / B31) (Borrelia burgdorferi), this protein is Ribosomal RNA small subunit methyltransferase G.